The chain runs to 393 residues: Chalcone synthase LF2 (393 aa).

C164 is an active-site residue.

This sequence belongs to the thiolase-like superfamily. Chalcone/stilbene synthases family.

It catalyses the reaction (E)-4-coumaroyl-CoA + 3 malonyl-CoA + 3 H(+) = 2',4,4',6'-tetrahydroxychalcone + 3 CO2 + 4 CoA. Its pathway is secondary metabolite biosynthesis; flavonoid biosynthesis. Its function is as follows. The primary product of this enzyme is 4,2',4',6'-tetrahydroxychalcone (also termed naringenin-chalcone or chalcone) which can under specific conditions spontaneously isomerize into naringenin. The chain is Chalcone synthase LF2 (CHS-LF2) from Ipomoea batatas (Sweet potato).